Consider the following 103-residue polypeptide: Large ribosomal subunit protein bL21 (103 aa).

It belongs to the bacterial ribosomal protein bL21 family. As to quaternary structure, part of the 50S ribosomal subunit. Contacts protein L20.

Functionally, this protein binds to 23S rRNA in the presence of protein L20. The sequence is that of Large ribosomal subunit protein bL21 from Borrelia garinii subsp. bavariensis (strain ATCC BAA-2496 / DSM 23469 / PBi) (Borreliella bavariensis).